A 31-amino-acid chain; its full sequence is Photosystem II reaction center protein T (31 aa).

A helical transmembrane segment spans residues 3–23 (ALVYVFLLVGTLMVIFFAIFF).

It belongs to the PsbT family. PSII is composed of 1 copy each of membrane proteins PsbA, PsbB, PsbC, PsbD, PsbE, PsbF, PsbH, PsbI, PsbJ, PsbK, PsbL, PsbM, PsbT, PsbX, PsbY, PsbZ, Psb30/Ycf12, at least 3 peripheral proteins of the oxygen-evolving complex and a large number of cofactors. It forms dimeric complexes.

The protein localises to the plastid. The protein resides in the chloroplast thylakoid membrane. Functionally, found at the monomer-monomer interface of the photosystem II (PS II) dimer, plays a role in assembly and dimerization of PSII. PSII is a light-driven water plastoquinone oxidoreductase, using light energy to abstract electrons from H(2)O, generating a proton gradient subsequently used for ATP formation. This Gracilaria tenuistipitata var. liui (Red alga) protein is Photosystem II reaction center protein T.